Consider the following 250-residue polypeptide: tRNA (guanine-N(1)-)-methyltransferase (250 aa).

S-adenosyl-L-methionine contacts are provided by residues glycine 116 and 136–141 (IGDYVL).

This sequence belongs to the RNA methyltransferase TrmD family. In terms of assembly, homodimer.

Its subcellular location is the cytoplasm. It catalyses the reaction guanosine(37) in tRNA + S-adenosyl-L-methionine = N(1)-methylguanosine(37) in tRNA + S-adenosyl-L-homocysteine + H(+). In terms of biological role, specifically methylates guanosine-37 in various tRNAs. This chain is tRNA (guanine-N(1)-)-methyltransferase, found in Pseudomonas entomophila (strain L48).